Here is a 253-residue protein sequence, read N- to C-terminus: Zinc finger protein GIS (253 aa).

The span at 1 to 10 (MDEATGETET) shows a compositional bias: acidic residues. Residues 1–85 (MDEATGETET…GDNSTDNNSI (85 aa)) form a disordered region. 3 stretches are compositionally biased toward polar residues: residues 11 to 21 (QDFMNVESFSQ), 49 to 63 (SITT…PYQT), and 76 to 85 (GDNSTDNNSI). The segment at 91-113 (FECHYCFRNFPTSQALGGHQNAH) adopts a C2H2-type zinc-finger fold.

Expressed in inflorescence meristems, floral meristems and stem epidermis.

The protein localises to the nucleus. Its function is as follows. Probable transcription factor required for the initiation of inflorescence trichomes in response to gibberellin (GA). Mediates the induction of GL1 expression by GA in inflorescence organs and is antagonized in its action by the DELLA repressor GAI. Acts upstream of the trichome initiation regulators GL1 and GL3, and downstream of the GA signaling repressor SPINDLY (SPY). Does not play a significant role in the cytokinin response. Controls trichome branching through GA signaling. Acts downstream of the key regulator STICHEL (STI) in an endoreduplication-independent pathway. Controls trichome cell division indirectly by acting downstream of a key endoreduplication regulator SIAMESE (SIM). The sequence is that of Zinc finger protein GIS (GIS) from Arabidopsis thaliana (Mouse-ear cress).